The following is a 303-amino-acid chain: uncharacterized protein (303 aa).

2 disordered regions span residues 1 to 89 (MTSP…NVRS) and 132 to 159 (SELPDLSGPVQRTVPCKPSPDRGSSTPR). Residues 61 to 89 (RASQSGYRPSDPLTTTRQSNPAPGANVRS) show a composition bias toward polar residues. 2 helical membrane passes run 205–225 (LLLSVALFFVWMIAVAFLYLL) and 264–284 (VLVGLVNIVLMTTMAAIAAFV).

It to M.tuberculosis Rv0007.

It localises to the cell membrane. This is an uncharacterized protein from Mycobacterium leprae (strain TN).